The primary structure comprises 127 residues: Large ribosomal subunit protein uL18 (127 aa).

This sequence belongs to the universal ribosomal protein uL18 family. As to quaternary structure, part of the 50S ribosomal subunit; part of the 5S rRNA/L5/L18/L25 subcomplex. Contacts the 5S and 23S rRNAs.

In terms of biological role, this is one of the proteins that bind and probably mediate the attachment of the 5S RNA into the large ribosomal subunit, where it forms part of the central protuberance. This Streptomyces avermitilis (strain ATCC 31267 / DSM 46492 / JCM 5070 / NBRC 14893 / NCIMB 12804 / NRRL 8165 / MA-4680) protein is Large ribosomal subunit protein uL18.